Here is a 465-residue protein sequence, read N- to C-terminus: Probable glycine dehydrogenase (decarboxylating) subunit 1 (465 aa).

This sequence belongs to the GcvP family. N-terminal subunit subfamily. The glycine cleavage system is composed of four proteins: P, T, L and H. In this organism, the P 'protein' is a heterodimer of two subunits.

The catalysed reaction is N(6)-[(R)-lipoyl]-L-lysyl-[glycine-cleavage complex H protein] + glycine + H(+) = N(6)-[(R)-S(8)-aminomethyldihydrolipoyl]-L-lysyl-[glycine-cleavage complex H protein] + CO2. Its function is as follows. The glycine cleavage system catalyzes the degradation of glycine. The P protein binds the alpha-amino group of glycine through its pyridoxal phosphate cofactor; CO(2) is released and the remaining methylamine moiety is then transferred to the lipoamide cofactor of the H protein. The protein is Probable glycine dehydrogenase (decarboxylating) subunit 1 of Aeropyrum pernix (strain ATCC 700893 / DSM 11879 / JCM 9820 / NBRC 100138 / K1).